A 305-amino-acid chain; its full sequence is tRNA uridine(34) hydroxylase (305 aa).

In terms of domain architecture, Rhodanese spans 125–219 (ADENTVVVDT…YLEEVPREDS (95 aa)). The active-site Cysteine persulfide intermediate is the cysteine 179.

Belongs to the TrhO family.

The catalysed reaction is uridine(34) in tRNA + AH2 + O2 = 5-hydroxyuridine(34) in tRNA + A + H2O. Its function is as follows. Catalyzes oxygen-dependent 5-hydroxyuridine (ho5U) modification at position 34 in tRNAs. This is tRNA uridine(34) hydroxylase from Brucella anthropi (strain ATCC 49188 / DSM 6882 / CCUG 24695 / JCM 21032 / LMG 3331 / NBRC 15819 / NCTC 12168 / Alc 37) (Ochrobactrum anthropi).